The chain runs to 271 residues: MASENMTPQDYIGHHLNNLQLDLRTFSLVDPQNPPATFWTINIDSMFFSVGLGLLFLVLFRSVAKKATSGVPGKFQTAIELVIGFVNGSVKDMYHGKSKLIAPLALTIFVWVFLMNLMDLLPIDLLPYIAEHVLGLPALRVVPSADVNVTLSMALGVFILILFYSIKMKGIGGFTKELTLQPFNHWAFIPVNLILEGVSLLSKPVSLGLRLFGNMYAGELIFILIAGLLPWWSQWILNVPWAIFHILIITLQAFIFMVLTIVYLSMASEEH.

Helical transmembrane passes span 40 to 60 (TINI…LVLF), 100 to 120 (LIAP…LMDL), 146 to 166 (DVNV…FYSI), 220 to 240 (LIFI…LNVP), and 242 to 262 (AIFH…LTIV).

It belongs to the ATPase A chain family. F-type ATPases have 2 components, CF(1) - the catalytic core - and CF(0) - the membrane proton channel. CF(1) has five subunits: alpha(3), beta(3), gamma(1), delta(1), epsilon(1). CF(0) has three main subunits: a(1), b(2) and c(9-12). The alpha and beta chains form an alternating ring which encloses part of the gamma chain. CF(1) is attached to CF(0) by a central stalk formed by the gamma and epsilon chains, while a peripheral stalk is formed by the delta and b chains.

It is found in the cell inner membrane. Key component of the proton channel; it plays a direct role in the translocation of protons across the membrane. This is ATP synthase subunit a from Shigella dysenteriae serotype 1 (strain Sd197).